The following is a 566-amino-acid chain: Proline--tRNA ligase 1 (566 aa).

Belongs to the class-II aminoacyl-tRNA synthetase family. ProS type 1 subfamily. Homodimer.

The protein resides in the cytoplasm. The enzyme catalyses tRNA(Pro) + L-proline + ATP = L-prolyl-tRNA(Pro) + AMP + diphosphate. Catalyzes the attachment of proline to tRNA(Pro) in a two-step reaction: proline is first activated by ATP to form Pro-AMP and then transferred to the acceptor end of tRNA(Pro). As ProRS can inadvertently accommodate and process non-cognate amino acids such as alanine and cysteine, to avoid such errors it has two additional distinct editing activities against alanine. One activity is designated as 'pretransfer' editing and involves the tRNA(Pro)-independent hydrolysis of activated Ala-AMP. The other activity is designated 'posttransfer' editing and involves deacylation of mischarged Ala-tRNA(Pro). The misacylated Cys-tRNA(Pro) is not edited by ProRS. The sequence is that of Proline--tRNA ligase 1 from Bacillus cereus (strain ZK / E33L).